A 417-amino-acid polypeptide reads, in one-letter code: Succinate--CoA ligase [ADP-forming] subunit beta, mitochondrial (417 aa).

The transit peptide at Met1 to Leu24 directs the protein to the mitochondrion. The 244-residue stretch at Ala32–Ala275 folds into the ATP-grasp domain. Residues Lys71, Gly78–Gly80, and Glu138 each bind ATP. Mg(2+)-binding residues include Asn230 and Asp244. Substrate is bound by residues Asn295 and Gly352–Met354.

This sequence belongs to the succinate/malate CoA ligase beta subunit family. As to quaternary structure, heterodimer of an alpha and a beta subunit. Mg(2+) is required as a cofactor. As to expression, expressed in roots, stems, flowers, leaves and fruits.

It localises to the mitochondrion. The enzyme catalyses succinate + ATP + CoA = succinyl-CoA + ADP + phosphate. It participates in carbohydrate metabolism; tricarboxylic acid cycle; succinate from succinyl-CoA (ligase route): step 1/1. In terms of biological role, succinyl-CoA synthetase functions in the citric acid cycle (TCA), coupling the hydrolysis of succinyl-CoA to the synthesis of ATP and thus represents the only step of substrate-level phosphorylation in the TCA. The beta subunit provides nucleotide specificity of the enzyme and binds the substrate succinate, while the binding sites for coenzyme A and phosphate are found in the alpha subunit. The sequence is that of Succinate--CoA ligase [ADP-forming] subunit beta, mitochondrial from Solanum lycopersicum (Tomato).